The chain runs to 385 residues: Methylthioribose-1-phosphate isomerase (385 aa).

Asp-255 (proton donor) is an active-site residue.

Belongs to the eIF-2B alpha/beta/delta subunits family. MtnA subfamily.

The protein localises to the cytoplasm. It localises to the nucleus. It catalyses the reaction 5-(methylsulfanyl)-alpha-D-ribose 1-phosphate = 5-(methylsulfanyl)-D-ribulose 1-phosphate. It functions in the pathway amino-acid biosynthesis; L-methionine biosynthesis via salvage pathway; L-methionine from S-methyl-5-thio-alpha-D-ribose 1-phosphate: step 1/6. Functionally, catalyzes the interconversion of methylthioribose-1-phosphate (MTR-1-P) into methylthioribulose-1-phosphate (MTRu-1-P). The sequence is that of Methylthioribose-1-phosphate isomerase (mri1) from Aspergillus clavatus (strain ATCC 1007 / CBS 513.65 / DSM 816 / NCTC 3887 / NRRL 1 / QM 1276 / 107).